The sequence spans 929 residues: LPS-assembly protein LptD (929 aa).

Positions 1 to 33 are cleaved as a signal peptide; sequence MAVKSLVFRRKFPLLVTGSLLALQPVAALTVQA. A disordered region spans residues 58–101; it reads NLPPRPAHTATSVSTAAAGSSVSGSGGETVEAEPTQRLVTESGG. Residues 66–90 show a composition bias toward low complexity; sequence TATSVSTAAAGSSVSGSGGETVEAE.

The protein belongs to the LptD family. Component of the lipopolysaccharide transport and assembly complex. Interacts with LptE and LptA.

It localises to the cell outer membrane. Together with LptE, is involved in the assembly of lipopolysaccharide (LPS) at the surface of the outer membrane. The protein is LPS-assembly protein LptD of Pseudomonas aeruginosa (strain LESB58).